The primary structure comprises 198 residues: tRNA (cytidine(56)-2'-O)-methyltransferase (198 aa).

S-adenosyl-L-methionine contacts are provided by residues leucine 81, glycine 110 to valine 114, and isoleucine 128 to glutamate 135. The segment at aspartate 178–serine 198 is disordered.

It belongs to the aTrm56 family. As to quaternary structure, homodimer.

It localises to the cytoplasm. The catalysed reaction is cytidine(56) in tRNA + S-adenosyl-L-methionine = 2'-O-methylcytidine(56) in tRNA + S-adenosyl-L-homocysteine + H(+). In terms of biological role, specifically catalyzes the AdoMet-dependent 2'-O-ribose methylation of cytidine at position 56 in tRNAs. This chain is tRNA (cytidine(56)-2'-O)-methyltransferase, found in Pyrococcus abyssi (strain GE5 / Orsay).